The following is a 308-amino-acid chain: Transmembrane and ubiquitin-like domain-containing protein 1 (308 aa).

The helical transmembrane segment at 11–31 (VTVLFALVLFFMVLMLAWVST) threads the bilayer. Residues 39–162 (THWIRPEPAQ…GLGDGTTAQS (124 aa)) are disordered. The segment covering 63–93 (PSQTLTNADPNSETVDSSDSTQSSREFQNAG) has biased composition (polar residues). A compositionally biased stretch (low complexity) spans 103–115 (SSSGSTVSTGGSV). The segment covering 132 to 149 (PNFTVSSRDPQAGASSSL) has biased composition (polar residues). In terms of domain architecture, Ubiquitin-like spans 169–242 (IHLRLKFLND…LHCHISQHAS (74 aa)). Helical transmembrane passes span 253 to 273 (VPLN…MLLW) and 283 to 303 (FTGT…AIAF).

It is found in the membrane. It localises to the cytoplasm. Its subcellular location is the nucleus. May contribute to the regulation of translation during cell-cycle progression. May contribute to the regulation of cell proliferation. The membrane form is involved in sterol-regulated ubiquitination and degradation of HMG-CoA reductase HMGCR. May be involved in centrosome assembly. The sequence is that of Transmembrane and ubiquitin-like domain-containing protein 1 (tmub1) from Xenopus laevis (African clawed frog).